The primary structure comprises 339 residues: Phenylalanine--tRNA ligase alpha subunit (339 aa).

Residue Glu-254 participates in Mg(2+) binding.

This sequence belongs to the class-II aminoacyl-tRNA synthetase family. Phe-tRNA synthetase alpha subunit type 1 subfamily. Tetramer of two alpha and two beta subunits. Mg(2+) serves as cofactor.

The protein localises to the cytoplasm. It catalyses the reaction tRNA(Phe) + L-phenylalanine + ATP = L-phenylalanyl-tRNA(Phe) + AMP + diphosphate + H(+). This chain is Phenylalanine--tRNA ligase alpha subunit, found in Clostridium acetobutylicum (strain ATCC 824 / DSM 792 / JCM 1419 / IAM 19013 / LMG 5710 / NBRC 13948 / NRRL B-527 / VKM B-1787 / 2291 / W).